The primary structure comprises 954 residues: Valine--tRNA ligase (954 aa).

The 'HIGH' region signature appears at 48–58; sequence PNVTGSLHMGH. The 'KMSKS' region motif lies at 560–564; that stretch reads KMSKS. K563 is an ATP binding site. Residues 883-954 are a coiled coil; it reads AGFINKEAEL…QTQYQAIENL (72 aa).

It belongs to the class-I aminoacyl-tRNA synthetase family. ValS type 1 subfamily. In terms of assembly, monomer.

The protein localises to the cytoplasm. The catalysed reaction is tRNA(Val) + L-valine + ATP = L-valyl-tRNA(Val) + AMP + diphosphate. Functionally, catalyzes the attachment of valine to tRNA(Val). As ValRS can inadvertently accommodate and process structurally similar amino acids such as threonine, to avoid such errors, it has a 'posttransfer' editing activity that hydrolyzes mischarged Thr-tRNA(Val) in a tRNA-dependent manner. This is Valine--tRNA ligase from Actinobacillus pleuropneumoniae serotype 3 (strain JL03).